The following is a 224-amino-acid chain: Fibronectin type III domain-containing protein 9 (224 aa).

The Fibronectin type-III domain maps to 1-101; the sequence is MNIEVGNISY…FHTLDKSPLA (101 aa). The helical transmembrane segment at 113–133 threads the bilayer; it reads LWVLMAILLACFTAVLAFICL. The segment at 175 to 224 is disordered; sequence LQGLPLVEMPRKNSRDGAELDPEANQDAPDAGALQRGGGDPPAILPHCGE. Positions 183–192 are enriched in basic and acidic residues; sequence MPRKNSRDGA.

It localises to the membrane. The protein is Fibronectin type III domain-containing protein 9 (FNDC9) of Homo sapiens (Human).